Reading from the N-terminus, the 400-residue chain is uncharacterized protein (400 aa).

This sequence belongs to the mimivirus R640 family.

It localises to the virion. This is an uncharacterized protein from Acanthamoeba polyphaga (Amoeba).